The sequence spans 438 residues: Xylose isomerase (438 aa).

Residues histidine 100 and aspartate 103 contribute to the active site. Glutamate 231, glutamate 267, histidine 270, aspartate 295, aspartate 306, aspartate 308, and aspartate 338 together coordinate Mg(2+).

This sequence belongs to the xylose isomerase family. As to quaternary structure, homotetramer. The cofactor is Mg(2+).

It localises to the cytoplasm. It catalyses the reaction alpha-D-xylose = alpha-D-xylulofuranose. This is Xylose isomerase from Pseudomonas savastanoi pv. phaseolicola (strain 1448A / Race 6) (Pseudomonas syringae pv. phaseolicola (strain 1448A / Race 6)).